The chain runs to 63 residues: MNNAKMWLVVKPTVGIPLFLVACAIASFLVHLMLVLTTGWMGDYYSGSFEAASLVSNATTLLS.

The Cytoplasmic segment spans residues 1–14; the sequence is MNNAKMWLVVKPTV. Residues 15–35 form a helical membrane-spanning segment; the sequence is GIPLFLVACAIASFLVHLMLV. A bacteriochlorophyll is bound at residue histidine 31. Over 36–63 the chain is Periplasmic; it reads LTTGWMGDYYSGSFEAASLVSNATTLLS.

This sequence belongs to the antenna complex alpha subunit family. As to quaternary structure, the core complex is formed by different alpha and beta chains, binding bacteriochlorophyll molecules, and arranged most probably in tetrameric structures disposed around the reaction center. The non-pigmented gamma chains may constitute additional components.

It is found in the cell inner membrane. Antenna complexes are light-harvesting systems, which transfer the excitation energy to the reaction centers. The protein is Light-harvesting protein B-800/850 alpha chain (pucA) of Rhodovulum sulfidophilum (Rhodobacter sulfidophilus).